A 181-amino-acid polypeptide reads, in one-letter code: NAD(P)H-quinone oxidoreductase subunit 6, chloroplastic (181 aa).

A run of 5 helical transmembrane segments spans residues 10–30 (TLLF…VVLL), 33–53 (VIYS…LYLL), 62–82 (AQVL…IMLV), 98–118 (IISA…IFTT), and 153–173 (LFPF…AITI).

The protein belongs to the complex I subunit 6 family. In terms of assembly, NDH is composed of at least 16 different subunits, 5 of which are encoded in the nucleus.

It localises to the plastid. The protein resides in the chloroplast thylakoid membrane. It catalyses the reaction a plastoquinone + NADH + (n+1) H(+)(in) = a plastoquinol + NAD(+) + n H(+)(out). The catalysed reaction is a plastoquinone + NADPH + (n+1) H(+)(in) = a plastoquinol + NADP(+) + n H(+)(out). Functionally, NDH shuttles electrons from NAD(P)H:plastoquinone, via FMN and iron-sulfur (Fe-S) centers, to quinones in the photosynthetic chain and possibly in a chloroplast respiratory chain. The immediate electron acceptor for the enzyme in this species is believed to be plastoquinone. Couples the redox reaction to proton translocation, and thus conserves the redox energy in a proton gradient. This Zygnema circumcarinatum (Green alga) protein is NAD(P)H-quinone oxidoreductase subunit 6, chloroplastic (ndhG).